The sequence spans 151 residues: Protein ripply1 (151 aa).

Positions 57 to 60 (WRPW) match the WRPW motif motif. The segment at 96–131 (HPVRLFWPKSRSFDYLYSAGEILLQNFPVQATINLY) is ripply homology domain. Residues 130 to 151 (LYEDSDSEEEEEDEEQEDEEEK) form a disordered region. The span at 132–151 (EDSDSEEEEEDEEQEDEEEK) shows a compositional bias: acidic residues.

This sequence belongs to the ripply family.

It is found in the nucleus. Plays a role in somitogenesis. Essential for transcriptional repression of the segmental patterning genes, thus terminating the segmentation program in the presomitic mesoderm, and also required for the maintenance of rostrocaudal polarity in somites. The protein is Protein ripply1 of Homo sapiens (Human).